We begin with the raw amino-acid sequence, 89 residues long: Putative membrane protein insertion efficiency factor (89 aa).

Positions 68-89 are disordered; it reads VPPPNSDARNAPHEAEASSHRL. The span at 77–89 shows a compositional bias: basic and acidic residues; that stretch reads NAPHEAEASSHRL.

Belongs to the UPF0161 family.

It is found in the cell inner membrane. Functionally, could be involved in insertion of integral membrane proteins into the membrane. The protein is Putative membrane protein insertion efficiency factor of Burkholderia mallei (strain SAVP1).